The sequence spans 103 residues: Small ribosomal subunit protein bS6c (103 aa).

Belongs to the bacterial ribosomal protein bS6 family.

The protein resides in the plastid. Its subcellular location is the chloroplast. Its function is as follows. Binds together with bS18 to 16S ribosomal RNA. The chain is Small ribosomal subunit protein bS6c (rps6) from Cyanidium caldarium (Red alga).